Here is a 529-residue protein sequence, read N- to C-terminus: BTB/POZ domain-containing protein 6 (529 aa).

The BTB domain occupies 127–197 (ADVHFIVGPA…LYSDEIDLEA (71 aa)).

As to quaternary structure, homodimer and heterodimer. Interacts with cul3 via the BTB domain.

It localises to the cytoplasm. Adapter protein for the cul3 E3 ubiquitin-protein ligase complex. Involved in late neuronal development and muscle formation. This is BTB/POZ domain-containing protein 6 (btbd6) from Xenopus laevis (African clawed frog).